A 113-amino-acid polypeptide reads, in one-letter code: Prefoldin subunit beta (113 aa).

Belongs to the prefoldin subunit beta family. Heterohexamer of two alpha and four beta subunits.

The protein localises to the cytoplasm. Its function is as follows. Molecular chaperone capable of stabilizing a range of proteins. Seems to fulfill an ATP-independent, HSP70-like function in archaeal de novo protein folding. This chain is Prefoldin subunit beta, found in Methanococcus vannielii (strain ATCC 35089 / DSM 1224 / JCM 13029 / OCM 148 / SB).